The sequence spans 2055 residues: Protein PHOTOPERIOD-INDEPENDENT EARLY FLOWERING 1 (2055 aa).

The segment at 1-47 (MASKGGKSKPDIVMASKSGKSKPDNESRAKRQKTLEAPKEPRRPKTH) is disordered. Residues 21-47 (SKPDNESRAKRQKTLEAPKEPRRPKTH) show a composition bias toward basic and acidic residues. The Nuclear localization signal 1 signature appears at 29-36 (AKRQKTLE). One can recognise an HSA domain in the interval 35–107 (LEAPKEPRRP…EEQRLRKVAL (73 aa)). Coiled coils occupy residues 78-147 (LRAS…LEFL) and 229-250 (EEDEKHFTKRERQEELEALQNE). Disordered stretches follow at residues 183-332 (KSDE…SNDS) and 340-359 (ETHSHDLEPGMTTASVKSRK). The span at 208–230 (ELDEDYDLKSEDETEDDEDTIEE) shows a compositional bias: acidic residues. 2 stretches are compositionally biased toward basic and acidic residues: residues 231–243 (DEKHFTKRERQEE) and 267–276 (VSRETSPVKD). Residues 392–416 (EEELAKADNEDHVEEIALLQKESEM) adopt a coiled-coil conformation. Residues 432-461 (KDISEDESESSFAVSEDSIVDSDENRQQAD) are disordered. One can recognise a Helicase ATP-binding domain in the interval 548 to 713 (VTMYEKKLNG…WSLMHFLMPH (166 aa)). 561-568 (DEMGLGKT) serves as a coordination point for ATP. Residues 664-667 (DEAH) carry the DEAH box motif. In terms of domain architecture, Helicase C-terminal spans 1076 to 1229 (KLQELAMLLR…NLVIQNGEYN (154 aa)). The tract at residues 1293 to 1313 (EEAVDNQEFTEEPVERPEDDE) is disordered. A coiled-coil region spans residues 1419-1492 (FEEKEWELDH…EREAAEVAEM (74 aa)). Short sequence motifs (nuclear localization signal) lie at residues 1506-1513 (KKKKKAKK) and 1570-1577 (KKRDLIVD). Positions 1577–1597 (DTDEEKTSKKKAKKHKKSLPN) are disordered. Residues 1584 to 1594 (SKKKAKKHKKS) show a composition bias toward basic residues. The Myb-like domain occupies 1673 to 1727 (SWLPQEDAILCAMVHEYGPNWNFVSGTLYGMTAGGAYRGRYRHPAYCCERYRELI). Disordered stretches follow at residues 1843–1864 (ALQDSGPSQPDNTISRSRLQET) and 1951–1977 (KSRTGTKAQSLGKHKLSASDSAKSTKS). Positions 1844-1864 (LQDSGPSQPDNTISRSRLQET) are enriched in polar residues. Residues 2006 to 2029 (GDREEEEEQEVDEKANSAEIEMIS) are a coiled coil.

The protein belongs to the SNF2/RAD54 helicase family. SWR1 subfamily. As to quaternary structure, component of the SWR1 chromatin-remodeling complex composed of at least ARP6/ESD1/SUF3, PIE1, SWC6, SWC2 and H2AZs (HTA8, HTA9, HTA11). Interacts (via c-terminus) with SWC6 and ARP6 and (via N-terminus) with H2AZs. As to expression, expressed in ovules, but not in stamens.

The protein localises to the nucleus. It carries out the reaction ATP + H2O = ADP + phosphate + H(+). In terms of biological role, component of the SWR1 complex which mediates the ATP-dependent exchange of histone H2A for the H2A variant H2A.F/Z leading to transcriptional regulation of selected genes (e.g. FLC) by chromatin remodeling. Probable DNA-dependent ATPase. Not involved in the repression of FLC in gametophytes, but required for the reactivation of FLC in early embryos and for the maintenance of full activation of FLC in late embryos. This chain is Protein PHOTOPERIOD-INDEPENDENT EARLY FLOWERING 1 (PIE1), found in Arabidopsis thaliana (Mouse-ear cress).